The following is a 503-amino-acid chain: TGF-beta receptor type-1 (503 aa).

The signal sequence occupies residues 1 to 33 (MEAAVAAPRPRLLLLVLAAAAAAAAALLPGATA). At 34 to 126 (LQCFCHLCTK…SSPGLGPVEL (93 aa)) the chain is on the extracellular side. Disulfide bonds link C36/C54, C38/C41, C48/C71, C86/C100, and C101/C106. N45 is a glycosylation site (N-linked (GlcNAc...) asparagine). A helical transmembrane segment spans residues 127–147 (AAVIAGPVCFVCISLMLMVYI). The Cytoplasmic portion of the chain corresponds to 148 to 503 (CHNRTVIHHR…QLSQQEGIKM (356 aa)). S165 bears the Phosphoserine mark. A GS domain is found at 175-204 (TTLKDLIYDMTTSGSGSGLPLLVQRTIART). Residues T185 and T186 each carry the phosphothreonine; by TGFBR2 modification. Phosphoserine; by TGFBR2 is present on residues S187, S189, and S191. Positions 193–194 (LP) match the FKBP1A-binding motif. The Protein kinase domain maps to 205-495 (IVLQESIGKG…LRIKKTLSQL (291 aa)). Residues 211–219 (IGKGRFGEV) and K232 contribute to the ATP site. Residue K268 forms a Glycyl lysine isopeptide (Lys-Gly) (interchain with G-Cter in ubiquitin) linkage. D333 acts as the Proton acceptor in catalysis. K391 is covalently cross-linked (Glycyl lysine isopeptide (Lys-Gly) (interchain with G-Cter in SUMO)).

The protein belongs to the protein kinase superfamily. TKL Ser/Thr protein kinase family. TGFB receptor subfamily. In terms of assembly, homodimer; in the endoplasmic reticulum but also at the cell membrane. Heterohexamer; TGFB1, TGFB2 and TGFB3 homodimeric ligands assemble a functional receptor composed of two TGFBR1 and TGFBR2 heterodimers to form a ligand-receptor heterohexamer. The respective affinity of TGBRB1 and TGFBR2 for the ligands may modulate the kinetics of assembly of the receptor and may explain the different biological activities of TGFB1, TGFB2 and TGFB3. Component of a complex composed of TSC22D1 (via N-terminus), TGFBR1 and TGFBR2; the interaction between TSC22D1 and TGFBR1 is inhibited by SMAD7 and promoted by TGFB1. Interacts with CD109; inhibits TGF-beta receptor activation in keratinocytes. Interacts with RBPMS. Interacts (unphosphorylated) with FKBP1A; prevents TGFBR1 phosphorylation by TGFBR2 and stabilizes it in the inactive conformation. Interacts with SMAD2, SMAD3 and ZFYVE9; ZFYVE9 recruits SMAD2 and SMAD3 to the TGF-beta receptor. Interacts with TRAF6 and MAP3K7; induces MAP3K7 activation by TRAF6. Interacts with PARD6A; involved in TGF-beta induced epithelial to mesenchymal transition. Interacts with NEDD4L. Interacts with SMAD7, SMURF1 and SMURF2; SMAD7 recruits NEDD4L, SMURF1 and SMURF2 to the TGF-beta receptor. Interacts with USP15 and VPS39. Interacts with SDCBP (via C-terminus). Interacts with CAV1 and this interaction is impaired in the presence of SDCBP. Interacts with APPL1; interaction is TGF beta dependent; mediates trafficking of the TGFBR1 from the endosomes to the nucleus via microtubules in a TRAF6-dependent manner. Interacts with GPR50; this interaction promotes the constitutive activation of SMAD signaling pathway. The cofactor is Mg(2+). Requires Mn(2+) as cofactor. Phosphorylated at basal levels in the absence of ligand. Activated upon phosphorylation by TGFBR2, mainly in the GS domain. Phosphorylation in the GS domain abrogates FKBP1A-binding. In terms of processing, N-Glycosylated. Post-translationally, ubiquitinated; undergoes ubiquitination catalyzed by several E3 ubiquitin ligases including SMURF1, SMURF2 and NEDD4L2. Results in the proteasomal and/or lysosomal degradation of the receptor thereby negatively regulating its activity. Deubiquitinated by USP15, leading to stabilization of the protein and enhanced TGF-beta signal. Its ubiquitination and proteasome-mediated degradation is negatively regulated by SDCBP. Ubiquitinated by BFAR via'Lys-63'-linked ubiquitination at Lys-268, leading to TGF-beta signaling activation. In terms of tissue distribution, found in all tissues examined, most abundant in placenta and least abundant in brain and heart. Expressed in a variety of cancer cell lines.

It is found in the cell membrane. Its subcellular location is the cell junction. The protein resides in the tight junction. The protein localises to the cell surface. It localises to the membrane raft. The catalysed reaction is L-threonyl-[receptor-protein] + ATP = O-phospho-L-threonyl-[receptor-protein] + ADP + H(+). The enzyme catalyses L-seryl-[receptor-protein] + ATP = O-phospho-L-seryl-[receptor-protein] + ADP + H(+). Kept in an inactive conformation by FKBP1A preventing receptor activation in absence of ligand. CD109 is another inhibitor of the receptor. Its function is as follows. Transmembrane serine/threonine kinase forming with the TGF-beta type II serine/threonine kinase receptor, TGFBR2, the non-promiscuous receptor for the TGF-beta cytokines TGFB1, TGFB2 and TGFB3. Transduces the TGFB1, TGFB2 and TGFB3 signal from the cell surface to the cytoplasm and is thus regulating a plethora of physiological and pathological processes including cell cycle arrest in epithelial and hematopoietic cells, control of mesenchymal cell proliferation and differentiation, wound healing, extracellular matrix production, immunosuppression and carcinogenesis. The formation of the receptor complex composed of 2 TGFBR1 and 2 TGFBR2 molecules symmetrically bound to the cytokine dimer results in the phosphorylation and the activation of TGFBR1 by the constitutively active TGFBR2. Activated TGFBR1 phosphorylates SMAD2 which dissociates from the receptor and interacts with SMAD4. The SMAD2-SMAD4 complex is subsequently translocated to the nucleus where it modulates the transcription of the TGF-beta-regulated genes. This constitutes the canonical SMAD-dependent TGF-beta signaling cascade. Also involved in non-canonical, SMAD-independent TGF-beta signaling pathways. For instance, TGFBR1 induces TRAF6 autoubiquitination which in turn results in MAP3K7 ubiquitination and activation to trigger apoptosis. Also regulates epithelial to mesenchymal transition through a SMAD-independent signaling pathway through PARD6A phosphorylation and activation. The sequence is that of TGF-beta receptor type-1 (TGFBR1) from Homo sapiens (Human).